Reading from the N-terminus, the 259-residue chain is MTELQIAAQRALRLMDLTTLNDNDTDEKVIALCHQAKSPAGDTAAVCIYPRFIPIARKTLREQGTPDVRIATVTNFPHGNDDIEIALVETRAAIAYGADEVDVVFPYRALMAGNEQVGFDLVKACKEACAAANVLLKVIIETGELKDAALIRKASEISIKAGADFIKTSTGKVPVNATLESAELMMSVIRDMGVAKRVGFKPAGGVRTAEDAAQYLALADRLLGEGWADSRHFRFGASSLLASLLQTLGYDAKGTGSSY.

The active-site Proton donor/acceptor is Asp102. Residue Lys167 is the Schiff-base intermediate with acetaldehyde of the active site. The active-site Proton donor/acceptor is the Lys201.

Belongs to the DeoC/FbaB aldolase family. DeoC type 2 subfamily.

It is found in the cytoplasm. It carries out the reaction 2-deoxy-D-ribose 5-phosphate = D-glyceraldehyde 3-phosphate + acetaldehyde. The protein operates within carbohydrate degradation; 2-deoxy-D-ribose 1-phosphate degradation; D-glyceraldehyde 3-phosphate and acetaldehyde from 2-deoxy-alpha-D-ribose 1-phosphate: step 2/2. In terms of biological role, catalyzes a reversible aldol reaction between acetaldehyde and D-glyceraldehyde 3-phosphate to generate 2-deoxy-D-ribose 5-phosphate. This chain is Deoxyribose-phosphate aldolase, found in Edwardsiella ictaluri (strain 93-146).